A 218-amino-acid chain; its full sequence is Cytochrome b6 (218 aa).

Residues 35–55 (IFYCLGGITLVCFLIQFATGF) form a helical membrane-spanning segment. Cys-38 is a binding site for heme c. The heme b site is built by His-89 and His-103. The next 3 membrane-spanning stretches (helical) occupy residues 93–113 (ASMMVLMLILHVFRVYLTGGF), 119–139 (LTWVTGVVMAVITVAFGVTGY), and 189–209 (LHTFVLPWTLAVFMLMHFLMI). His-190 and His-205 together coordinate heme b.

It belongs to the cytochrome b family. PetB subfamily. The 4 large subunits of the cytochrome b6-f complex are cytochrome b6, subunit IV (17 kDa polypeptide, PetD), cytochrome f and the Rieske protein, while the 4 small subunits are PetG, PetL, PetM and PetN. The complex functions as a dimer. The cofactor is heme b. Heme c serves as cofactor.

The protein resides in the cellular thylakoid membrane. Component of the cytochrome b6-f complex, which mediates electron transfer between photosystem II (PSII) and photosystem I (PSI), cyclic electron flow around PSI, and state transitions. This Prochlorococcus marinus (strain MIT 9211) protein is Cytochrome b6.